The sequence spans 630 residues: Sodium-dependent serotonin transporter (630 aa).

At 1 to 87 the chain is on the cytoplasmic side; that stretch reads METTPLNSQK…ERETWGKKMD (87 aa). The interval 23–60 is disordered; the sequence is ENGVLQKGVPTTADRAEPSQISNGYSAVPSTSAGDEAS. Positions 41 to 55 are enriched in polar residues; that stretch reads SQISNGYSAVPSTSA. Residue Y47 is modified to Phosphotyrosine. The chain crosses the membrane as a helical span at residues 88-112; sequence FLLSVIGYAVDLGNIWRFPYICYQN. Na(+) is bound by residues G94, A96, V97, D98, and N101. Serotonin is bound at residue D98. Over 113–115 the chain is Extracellular; it reads GGG. A helical transmembrane segment spans residues 116-135; it reads AFLLPYTIMAIFGGIPLFYM. The Cytoplasmic portion of the chain corresponds to 136-160; sequence ELALGQYHRNGCISIWRKICPIFKG. Y142 is subject to Phosphotyrosine. The chain crosses the membrane as a helical span at residues 161 to 186; the sequence is IGYAICIIAFYIASYYNTIIAWALYY. Over 187-252 the chain is Extracellular; the sequence is LISSLTDRLP…KGLQDLGTIS (66 aa). A disulfide bridge connects residues C200 and C209. 2 N-linked (GlcNAc...) asparagine glycosylation sites follow: N208 and N217. Residues 253–271 traverse the membrane as a helical segment; the sequence is WQLTLCIVLIFTVIYFSIW. Residues 272-277 lie on the Cytoplasmic side of the membrane; the sequence is KGVKTS. T276 carries the post-translational modification Phosphothreonine. Residues 278 to 297 form a helical membrane-spanning segment; the sequence is GKVVWVTATFPYIVLSVLLV. At 298 to 324 the chain is on the extracellular side; sequence RGATLPGAWRGVVFYLKPNWQKLLETG. The helical transmembrane segment at 325 to 347 threads the bilayer; it reads VWVDAAAQIFFSLGPGFGVLLAF. S336 contributes to the Na(+) binding site. Residues 348–360 are Cytoplasmic-facing; that stretch reads ASYNKFNNNCYQD. The chain crosses the membrane as a helical span at residues 361–380; sequence ALVTSVVNCMTSFVSGFVIF. N368 is a binding site for Na(+). Residues 381-421 are Extracellular-facing; it reads TVLGYMAEMRNEDVSEVAKDAGPSLLFITYAEAIANMPAST. A helical membrane pass occupies residues 422 to 443; that stretch reads FFAIIFFLMLITLGLDSTFAGL. Positions 434, 437, and 438 each coordinate Na(+). Position 439 (T439) interacts with serotonin. Residues 444–463 are Cytoplasmic-facing; sequence EGVITAVLDEFPHIWAKRRE. Residues 464–483 traverse the membrane as a helical segment; the sequence is WFVLIVVITCVLGSLLTLTS. At 484–494 the chain is on the extracellular side; that stretch reads GGAYVVTLLEE. Serotonin contacts are provided by E494 and Y495. Residues 495 to 516 traverse the membrane as a helical segment; that stretch reads YATGPAVLTVALIEAVAVSWFY. Over 517 to 538 the chain is Cytoplasmic; that stretch reads GITQFCSDVKEMLGFSPGWFWR. Residues 539 to 558 traverse the membrane as a helical segment; the sequence is ICWVAISPLFLLFIICSFLM. Residues F556 and S559 each contribute to the serotonin site. Topologically, residues 559–574 are extracellular; sequence SPPQLRLFQYNYPHWS. The chain crosses the membrane as a helical span at residues 575 to 595; that stretch reads IVLGYCIGMSSVICIPTYIIY. Residues 596-630 lie on the Cytoplasmic side of the membrane; that stretch reads RLISTPGTLKERIIKSITPETPTEIPCGDIRMNAV. Residues 616–624 are interaction with RAB4A; it reads TPTEIPCGD.

Belongs to the sodium:neurotransmitter symporter (SNF) (TC 2.A.22) family. SLC6A4 subfamily. In terms of assembly, monomer or homooligomer. Interacts with TGFB1I1. Interacts with SEC23A, SEC24C and PATJ. Interacts with NOS1; the interaction may diminish the cell surface localization of SERT in the brain and, correspondingly, reduce serotonin reuptake. Interacts (via C-terminus) with SCAMP2; the interaction is direct and retains transporter molecules intracellularly. Interacts with filamentous actin and STX1A. Interacts (via the N-terminus) with STX1A (via the H3 domain); this interaction regulates SLC4A6 channel conductance. Interacts with ITGAV:ITGB3. Interacts (via C-terminus) with ITGB3; this interaction regulates SLC6A4 trafficking. In terms of processing, phosphorylation at Thr-276 increases 5-HT uptake and is required for cGMP-mediated SERT regulation. In terms of tissue distribution, expressed in the intestinal crypt epithelial cells and myenteric neurons of the small intestine (at protein level). Expressed in the brain.

Its subcellular location is the cell membrane. It localises to the endomembrane system. The protein localises to the endosome membrane. It is found in the synapse. The protein resides in the cell junction. Its subcellular location is the focal adhesion. It localises to the cell projection. The protein localises to the neuron projection. The catalysed reaction is serotonin(out) + K(+)(in) + Na(+)(out) + H(+)(in) = serotonin(in) + K(+)(out) + Na(+)(in) + H(+)(out). Its function is as follows. Serotonin transporter that cotransports serotonin with one Na(+) ion in exchange for one K(+) ion and possibly one proton in an overall electroneutral transport cycle. Transports serotonin across the plasma membrane from the extracellular compartment to the cytosol thus limiting serotonin intercellular signaling. Essential for serotonin homeostasis in the central nervous system. In the developing somatosensory cortex, acts in glutamatergic neurons to control serotonin uptake and its trophic functions accounting for proper spatial organization of cortical neurons and elaboration of sensory circuits. In the mature cortex, acts primarily in brainstem raphe neurons to mediate serotonin uptake from the synaptic cleft back into the pre-synaptic terminal thus terminating serotonin signaling at the synapse. Modulates mucosal serotonin levels in the gastrointestinal tract through uptake and clearance of serotonin in enterocytes. Required for enteric neurogenesis and gastrointestinal reflexes. Regulates blood serotonin levels by ensuring rapid high affinity uptake of serotonin from plasma to platelets, where it is further stored in dense granules via vesicular monoamine transporters and then released upon stimulation. Mechanistically, the transport cycle starts with an outward-open conformation having Na1(+) and Cl(-) sites occupied. The binding of a second extracellular Na2(+) ion and serotonin substrate leads to structural changes to outward-occluded to inward-occluded to inward-open, where the Na2(+) ion and serotonin are released into the cytosol. Binding of intracellular K(+) ion induces conformational transitions to inward-occluded to outward-open and completes the cycle by releasing K(+) possibly together with a proton bound to Asp-98 into the extracellular compartment. Na1(+) and Cl(-) ions remain bound throughout the transport cycle. Additionally, displays serotonin-induced channel-like conductance for monovalent cations, mainly Na(+) ions. The channel activity is uncoupled from the transport cycle and may contribute to the membrane resting potential or excitability. The polypeptide is Sodium-dependent serotonin transporter (Slc6a4) (Rattus norvegicus (Rat)).